We begin with the raw amino-acid sequence, 129 residues long: Ribosome-binding factor A (129 aa).

Belongs to the RbfA family. As to quaternary structure, monomer. Binds 30S ribosomal subunits, but not 50S ribosomal subunits or 70S ribosomes.

The protein localises to the cytoplasm. Its function is as follows. One of several proteins that assist in the late maturation steps of the functional core of the 30S ribosomal subunit. Associates with free 30S ribosomal subunits (but not with 30S subunits that are part of 70S ribosomes or polysomes). Required for efficient processing of 16S rRNA. May interact with the 5'-terminal helix region of 16S rRNA. The chain is Ribosome-binding factor A from Gloeobacter violaceus (strain ATCC 29082 / PCC 7421).